Consider the following 331-residue polypeptide: Putative T-box protein 36 (331 aa).

The T-box DNA-binding region spans 29–210 (EITKKQWNQL…MNRFSRKRKY (182 aa)).

The protein resides in the nucleus. The chain is Putative T-box protein 36 (tbx-36) from Caenorhabditis elegans.